A 393-amino-acid polypeptide reads, in one-letter code: MKRVTGFPTRPDMVQQLLNVGFDYYNLPSSDGSHYWSDNVAYEFTLAEIDRIEDTTNELHSMCLDFAADEIKKGDYENYHFTELQKQLIETSWRNQEPYLYGRFDFGYDGNNLKMFEYNADTPTSLLEAAVVQWQWLEQIEGLKHRDQFNWIHEELIKHFQFLKQQSGKTDFHLSAMQDAGREDWGNVDYLADVAYNAGWNIHQLAVEDIGYNSETKKFVDLNDQPIEMLFKLYPLEWLSHAEFARHITTAETRFIEPAWKMLLSNKALLAKLWARYPNHPHLLPAYFTPFELPKDLSMWVKKPLLGREGANVFYYEKNNGVEFAAKGSEHSTFYGNSGYVYQQKFELPSFDGMYPIIGSWVVGDVACGMGLREDFTAVTGNDSHFIPHYFVP.

103 to 105 contributes to the ATP binding site; the sequence is RFD. Residues Asp-105, Glu-117, and Asn-119 each contribute to the Mg(2+) site. ATP contacts are provided by residues Lys-267, Lys-303, Gly-310, Gln-343, and 378-380; that span reads AVT.

Belongs to the glutathionylspermidine synthase preATP-grasp family.

May be a ligase forming an amide bond. Shows ATPase activity. The protein is Putative acid--amine ligase HI_0929 of Haemophilus influenzae (strain ATCC 51907 / DSM 11121 / KW20 / Rd).